Reading from the N-terminus, the 792-residue chain is Xaa-Pro dipeptidyl-peptidase (792 aa).

Active-site charge relay system residues include S363, D482, and H513.

It belongs to the peptidase S15 family. Homodimer.

The protein localises to the cytoplasm. The enzyme catalyses Hydrolyzes Xaa-Pro-|- bonds to release unblocked, N-terminal dipeptides from substrates including Ala-Pro-|-p-nitroanilide and (sequentially) Tyr-Pro-|-Phe-Pro-|-Gly-Pro-|-Ile.. Its function is as follows. Removes N-terminal dipeptides sequentially from polypeptides having unsubstituted N-termini provided that the penultimate residue is proline. The protein is Xaa-Pro dipeptidyl-peptidase (pepX) of Lactobacillus delbrueckii subsp. lactis.